The sequence spans 337 residues: Large ribosomal subunit protein uL3 (337 aa).

This sequence belongs to the universal ribosomal protein uL3 family. In terms of assembly, part of the 50S ribosomal subunit. Forms a cluster with proteins L14 and L24e.

One of the primary rRNA binding proteins, it binds directly near the 3'-end of the 23S rRNA, where it nucleates assembly of the 50S subunit. The polypeptide is Large ribosomal subunit protein uL3 (Methanospirillum hungatei JF-1 (strain ATCC 27890 / DSM 864 / NBRC 100397 / JF-1)).